A 256-amino-acid polypeptide reads, in one-letter code: DNA repair protein RecO (256 aa).

Belongs to the RecO family.

Functionally, involved in DNA repair and RecF pathway recombination. This Rhizobium etli (strain ATCC 51251 / DSM 11541 / JCM 21823 / NBRC 15573 / CFN 42) protein is DNA repair protein RecO.